The primary structure comprises 519 residues: Na(+)/H(+) exchange regulatory cofactor NHE-RF3 (519 aa).

Residues 9-90 form the PDZ 1 domain; that stretch reads ECKLSKQEGQ…SVTLLVLDGD (82 aa). Phosphoserine occurs at positions 108, 148, 192, 250, 334, and 348. 2 consecutive PDZ domains span residues 134-215 and 243-323; these read RLCY…VDKE and IVEM…VDKE. The disordered stretch occupies residues 347-374; sequence GSVKEAPAPTPTSLEVSSPPDTTEEVDH. Positions 357–367 are enriched in polar residues; that stretch reads PTSLEVSSPPD. The 81-residue stretch at 378–458 folds into the PDZ 4 domain; it reads LCRLAKGENG…NVTLLVCGKK (81 aa). Residue Thr451 is modified to Phosphothreonine. The interval 479-519 is disordered; the sequence is DTPPDSKEGIVVESNHDSHMAKERAHSTASHSSSNSEDTEM. The span at 482–504 shows a compositional bias: basic and acidic residues; sequence PDSKEGIVVESNHDSHMAKERAH. Phosphoserine is present on residues Ser492, Ser508, Ser510, Ser511, Ser512, and Ser514. Low complexity predominate over residues 505–519; that stretch reads STASHSSSNSEDTEM.

Belongs to the NHER family. As to quaternary structure, interacts with PDZK1IP1 and ABCC2. Interacts (via PDZ domains 1 and 3) with SCARB1 (C-terminal domain). Forms a heterodimeric complex with NHERF1. Interacts with AKAP2, BCR, CFTR, SLC22A12, SLC22A4, SLC22A5, NHERF2 and SLC17A1. Component of a complex, composed of PDZK1, SYNGAP1, KLHL17 and NMDA receptors. Interacts (via PDZ1 domain) directly with KLHL17; the interaction is important for integrity of actin cytoskeleton structures in neurons. Interacts (via the first PDZ domain) with PTGIR (via non-isoprenylated C-terminus). Interacts (via C-terminal PDZ domain) with SLC26A6 (via C-terminal domain). Interacts (via C-terminal PDZ domain) with SLC9A3 (via C-terminal domain). Interacts (via PDZ domains 1 and 3) with SLC5A8 (via PDZ-binding motif); interaction increases nicotinate transport activity of SLC5A8. Expression is limited to epithelial cells. Expressed in the kidney (brush border of proximal tubule), pancreas, liver, and small intestine. Expressed at a lower level in the adrenal cortex, testis and stomach. Overexpressed in breast, renal and lung carcinomas.

The protein resides in the membrane. It is found in the cell membrane. In terms of biological role, a scaffold protein that connects plasma membrane proteins and regulatory components, regulating their surface expression in epithelial cells apical domains. May be involved in the coordination of a diverse range of regulatory processes for ion transport and second messenger cascades. In complex with NHERF1, may cluster proteins that are functionally dependent in a mutual fashion and modulate the trafficking and the activity of the associated membrane proteins. May play a role in the cellular mechanisms associated with multidrug resistance through its interaction with ABCC2 and PDZK1IP1. May potentiate the CFTR chloride channel activity. Required for normal cell-surface expression of SCARB1. Plays a role in maintaining normal plasma cholesterol levels via its effects on SCARB1. Plays a role in the normal localization and function of the chloride-anion exchanger SLC26A6 to the plasma membrane in the brush border of the proximal tubule of the kidney. May be involved in the regulation of proximal tubular Na(+)-dependent inorganic phosphate cotransport therefore playing an important role in tubule function. The protein is Na(+)/H(+) exchange regulatory cofactor NHE-RF3 (PDZK1) of Homo sapiens (Human).